The chain runs to 443 residues: L-seryl-tRNA(Sec) selenium transferase (443 aa).

Lys-285 is modified (N6-(pyridoxal phosphate)lysine).

The protein belongs to the SelA family. Requires pyridoxal 5'-phosphate as cofactor.

The protein resides in the cytoplasm. The catalysed reaction is L-seryl-tRNA(Sec) + selenophosphate + H(+) = L-selenocysteinyl-tRNA(Sec) + phosphate. The protein operates within aminoacyl-tRNA biosynthesis; selenocysteinyl-tRNA(Sec) biosynthesis; selenocysteinyl-tRNA(Sec) from L-seryl-tRNA(Sec) (bacterial route): step 1/1. Converts seryl-tRNA(Sec) to selenocysteinyl-tRNA(Sec) required for selenoprotein biosynthesis. The chain is L-seryl-tRNA(Sec) selenium transferase from Campylobacter lari (strain RM2100 / D67 / ATCC BAA-1060).